A 195-amino-acid chain; its full sequence is Imidazoleglycerol-phosphate dehydratase (195 aa).

It belongs to the imidazoleglycerol-phosphate dehydratase family.

Its subcellular location is the cytoplasm. The enzyme catalyses D-erythro-1-(imidazol-4-yl)glycerol 3-phosphate = 3-(imidazol-4-yl)-2-oxopropyl phosphate + H2O. It functions in the pathway amino-acid biosynthesis; L-histidine biosynthesis; L-histidine from 5-phospho-alpha-D-ribose 1-diphosphate: step 6/9. This Ruegeria pomeroyi (strain ATCC 700808 / DSM 15171 / DSS-3) (Silicibacter pomeroyi) protein is Imidazoleglycerol-phosphate dehydratase.